The primary structure comprises 382 residues: 1-deoxy-D-xylulose 5-phosphate reductoisomerase (382 aa).

NADPH contacts are provided by T10, G11, S12, I13, G36, and N122. Residue K123 participates in 1-deoxy-D-xylulose 5-phosphate binding. Position 124 (E124) interacts with NADPH. D148 serves as a coordination point for Mn(2+). 1-deoxy-D-xylulose 5-phosphate contacts are provided by S149, E150, S174, and H197. E150 contributes to the Mn(2+) binding site. Residue G203 participates in NADPH binding. Positions 210, 215, 216, and 219 each coordinate 1-deoxy-D-xylulose 5-phosphate. Residue E219 coordinates Mn(2+).

It belongs to the DXR family. The cofactor is Mg(2+). Mn(2+) serves as cofactor.

It carries out the reaction 2-C-methyl-D-erythritol 4-phosphate + NADP(+) = 1-deoxy-D-xylulose 5-phosphate + NADPH + H(+). It functions in the pathway isoprenoid biosynthesis; isopentenyl diphosphate biosynthesis via DXP pathway; isopentenyl diphosphate from 1-deoxy-D-xylulose 5-phosphate: step 1/6. Functionally, catalyzes the NADPH-dependent rearrangement and reduction of 1-deoxy-D-xylulose-5-phosphate (DXP) to 2-C-methyl-D-erythritol 4-phosphate (MEP). This chain is 1-deoxy-D-xylulose 5-phosphate reductoisomerase, found in Chlorobaculum tepidum (strain ATCC 49652 / DSM 12025 / NBRC 103806 / TLS) (Chlorobium tepidum).